Reading from the N-terminus, the 60-residue chain is Sec-independent protein translocase protein TatA (60 aa).

Residues 1 to 21 form a helical membrane-spanning segment; the sequence is MLSNIGVPGLILILVIALVIF.

Belongs to the TatA/E family. In terms of assembly, forms a complex with TatC.

It localises to the cell membrane. Functionally, part of the twin-arginine translocation (Tat) system that transports large folded proteins containing a characteristic twin-arginine motif in their signal peptide across membranes. TatA could form the protein-conducting channel of the Tat system. The chain is Sec-independent protein translocase protein TatA from Anoxybacillus flavithermus (strain DSM 21510 / WK1).